Consider the following 238-residue polypeptide: uncharacterized protein (238 aa).

This is an uncharacterized protein from Rickettsia prowazekii (strain Madrid E).